Consider the following 191-residue polypeptide: Adenine phosphoribosyltransferase (191 aa).

Belongs to the purine/pyrimidine phosphoribosyltransferase family. Homodimer.

It localises to the cytoplasm. The catalysed reaction is AMP + diphosphate = 5-phospho-alpha-D-ribose 1-diphosphate + adenine. It functions in the pathway purine metabolism; AMP biosynthesis via salvage pathway; AMP from adenine: step 1/1. Its function is as follows. Catalyzes a salvage reaction resulting in the formation of AMP, that is energically less costly than de novo synthesis. The protein is Adenine phosphoribosyltransferase of Bordetella bronchiseptica (strain ATCC BAA-588 / NCTC 13252 / RB50) (Alcaligenes bronchisepticus).